The chain runs to 197 residues: Guanylate kinase (197 aa).

A Guanylate kinase-like domain is found at 7–185 (GLIIILSSPS…TLKKIHEIIV (179 aa)). Residue 14–21 (SPSGTGKS) coordinates ATP.

The protein belongs to the guanylate kinase family.

It is found in the cytoplasm. It catalyses the reaction GMP + ATP = GDP + ADP. Essential for recycling GMP and indirectly, cGMP. In Rickettsia prowazekii (strain Madrid E), this protein is Guanylate kinase (gmk).